A 583-amino-acid polypeptide reads, in one-letter code: Proteasome-associated ATPase (583 aa).

Residues 1 to 19 (METPNQDSGRTPTEQSAAN) are compositionally biased toward polar residues. The interval 1–22 (METPNQDSGRTPTEQSAANDLS) is disordered. Residues 24 to 75 (ADRQVNILRDKLRHIDRQLAAATQNNTKLVSMLETAKAEILRLKNALDQEGQ) are a coiled coil. 271-276 (GCGKTL) provides a ligand contact to ATP. A docks into pockets in the proteasome alpha-ring region spans residues 582–583 (YL).

This sequence belongs to the AAA ATPase family. As to quaternary structure, homohexamer. Assembles into a hexameric ring structure that caps the 20S proteasome core. Strongly interacts with the prokaryotic ubiquitin-like protein Pup through a hydrophobic interface; the interacting region of ARC lies in its N-terminal coiled-coil domain. There is one Pup binding site per ARC hexamer ring. Upon ATP-binding, the C-terminus of ARC interacts with the alpha-rings of the proteasome core, possibly by binding to the intersubunit pockets.

The protein operates within protein degradation; proteasomal Pup-dependent pathway. Its function is as follows. ATPase which is responsible for recognizing, binding, unfolding and translocation of pupylated proteins into the bacterial 20S proteasome core particle. May be essential for opening the gate of the 20S proteasome via an interaction with its C-terminus, thereby allowing substrate entry and access to the site of proteolysis. Thus, the C-termini of the proteasomal ATPase may function like a 'key in a lock' to induce gate opening and therefore regulate proteolysis. This chain is Proteasome-associated ATPase, found in Pseudarthrobacter chlorophenolicus (strain ATCC 700700 / DSM 12829 / CIP 107037 / JCM 12360 / KCTC 9906 / NCIMB 13794 / A6) (Arthrobacter chlorophenolicus).